A 486-amino-acid chain; its full sequence is Elastin-binding protein EbpS (486 aa).

A compositionally biased stretch (basic and acidic residues) spans 1–40; that stretch reads MSNNFKDDFEKNRQSIDTNSHQDHTEDVEKDQSELEHQDT. A disordered region spans residues 1-314; the sequence is MSNNFKDDFE…HHDRDKERKK (314 aa). The Extracellular segment spans residues 2 to 204; it reads SNNFKDDFEK…ESKDHHSGKK (203 aa). The segment at 14–34 is elastin-binding; sequence QSIDTNSHQDHTEDVEKDQSE. Residues 64–85 show a composition bias toward polar residues; that stretch reads TNHNKQVHNESQTSEDNVQNEA. Composition is skewed to basic and acidic residues over residues 103–117, 126–160, and 180–199; these read EPSH…EEGY, DKSH…KSEA, and SKDK…SKDH. Low complexity predominate over residues 204–225; the sequence is KGAAIGAGTAGVAGAAGAMGVS. Residues 205 to 225 form a helical membrane-spanning segment; it reads GAAIGAGTAGVAGAAGAMGVS. Residues 226–319 lie on the Cytoplasmic side of the membrane; it reads KAKKHSNDAQ…KERKKGGMAK (94 aa). Residues 233 to 246 are compositionally biased toward polar residues; sequence DAQNKSNSGKVNNS. Over residues 247 to 259 the composition is skewed to basic and acidic residues; the sequence is TEDKASEDKSKEH. Over residues 278-297 the composition is skewed to low complexity; that stretch reads GAASNSASAASKPHASNNAS. A compositionally biased stretch (basic and acidic residues) spans 300-314; that stretch reads NDEHDHHDRDKERKK. A helical transmembrane segment spans residues 320 to 340; sequence VLLPLIAAVLIIGALAIFGGM. The Extracellular segment spans residues 341 to 486; sequence ALNNHNNGTK…IRNGQQIVIP (146 aa). Residues 351–440 are disordered; sequence ENKIANTNKN…QRQGGGQRHT (90 aa). Basic and acidic residues predominate over residues 361–398; that stretch reads NADESKDKDTSKDASKDKSKSTDSDKSKDDQDKATKDE. Over residues 403–431 the composition is skewed to low complexity; it reads QNNANQANNQAQNNQNQQQANQNQQQQQQ. One can recognise a LysM domain in the interval 437–485; the sequence is QRHTVNGQENLYRIAIQYYGSGSPENVEKIRRANGLSGNNIRNGQQIVI.

Its subcellular location is the cell membrane. Functionally, promotes binding of soluble elastin peptides and tropoelastin to S.aureus cells although it is not able to promote bacterial adherence to immobilized elastin and, therefore, is not a microbial surface component recognizing adhesive matrix molecule (MSCRAMM). This chain is Elastin-binding protein EbpS (ebpS), found in Staphylococcus aureus (strain MRSA252).